A 551-amino-acid chain; its full sequence is HTH-type transcriptional regulator SgrR (551 aa).

In terms of domain architecture, HTH marR-type spans 1-116 (MPSARLQQQF…LVSHLGRSFR (116 aa)). Residues 26 to 49 (LNELAALLSCSRRHMRTLLNTMQD) constitute a DNA-binding region (H-T-H motif). The solute-binding stretch occupies residues 163-492 (ELEADIAHHW…IDWQADAARW (330 aa)).

Its function is as follows. Activates the small RNA gene sgrS under glucose-phosphate stress conditions as well as yfdZ. Represses its own transcription under both stress and non-stress conditions. Might act as a sensor of the intracellular accumulation of phosphoglucose by binding these molecules in its C-terminal solute-binding domain. The sequence is that of HTH-type transcriptional regulator SgrR from Shigella boydii serotype 4 (strain Sb227).